Consider the following 1252-residue polypeptide: Calmodulin-regulated spectrin-associated protein 3 (1252 aa).

Disordered stretches follow at residues Lys-183 to Gln-205, His-331 to His-385, Ser-429 to Asp-457, Gly-479 to Leu-604, Phe-638 to Tyr-697, Gln-712 to Arg-935, Thr-962 to Thr-981, Asp-996 to Ala-1030, and Pro-1063 to Arg-1114. Phosphothreonine is present on Thr-184. Ser-193 is subject to Phosphoserine. Positions Pro-203–Met-312 constitute a Calponin-homology (CH) domain. Phosphoserine is present on residues Ser-334, Ser-347, Ser-351, Ser-368, Ser-373, and Ser-382. Polar residues predominate over residues Pro-335–Val-353. Residues Pro-359–Ser-373 are compositionally biased toward low complexity. 3 stretches are compositionally biased toward polar residues: residues Thr-374–Met-383, Val-441–Gln-450, and Glu-525–Ser-534. Residues Ser-548, Ser-555, and Ser-561 each carry the phosphoserine modification. The span at Ala-569–Ala-580 shows a compositional bias: basic and acidic residues. Residues Glu-595 to His-629 are a coiled coil. At Ser-683 the chain carries Phosphoserine. A coiled-coil region spans residues Asp-696–Ala-727. Pro residues predominate over residues Pro-729 to Ala-739. Low complexity predominate over residues Ala-740–Pro-768. Residue Ser-767 is modified to Phosphoserine. Thr-797 is subject to Phosphothreonine. Phosphoserine is present on residues Ser-812 and Ser-881. Residues Ser-812–Leu-825 show a composition bias toward polar residues. Over residues Tyr-887–Ala-934 the composition is skewed to basic and acidic residues. Positions Glu-896–Leu-943 form a coiled coil. Ser-1077 is modified (phosphoserine). Positions Gly-1112–Lys-1246 constitute a CKK domain.

The protein belongs to the CAMSAP1 family. In terms of assembly, interacts with PLEKHA7. Interacts with CAMSAP2. Interacts with KATNA1 and KATNB1; leading to regulate the length of CAMSAP3-decorated microtubule stretches. Interacts with AKAP9; regulating Golgi assembly in epithelial cells. Interacts with MACF1. Interacts with isoform C of CDH23; leading to inhibit CAMSAP3 ability to induce microtubule bundle formation. Interacts with AKNA. As to expression, expressed at the apical surface of respiratory epithelia, as well as in the acini of submucosal glands (at protein level). In cochlea, restricted to the organ of Corti and increases during development (at protein level). Highly expressed in both sensory hair cells and supporting cells.

It is found in the cytoplasm. The protein resides in the cytoskeleton. It localises to the cell junction. The protein localises to the adherens junction. Its subcellular location is the cilium axoneme. It is found in the cilium basal body. Functionally, key microtubule-organizing protein that specifically binds the minus-end of non-centrosomal microtubules and regulates their dynamics and organization. Specifically recognizes growing microtubule minus-ends and autonomously decorates and stabilizes microtubule lattice formed by microtubule minus-end polymerization. Acts on free microtubule minus-ends that are not capped by microtubule-nucleating proteins or other factors and protects microtubule minus-ends from depolymerization. In addition, it also reduces the velocity of microtubule polymerization. Required for the biogenesis and the maintenance of zonula adherens by anchoring the minus-end of microtubules to zonula adherens and by recruiting the kinesin KIFC3 to those junctional sites. Required for orienting the apical-to-basal polarity of microtubules in epithelial cells: acts by tethering non-centrosomal microtubules to the apical cortex, leading to their longitudinal orientation. Plays a key role in early embryos, which lack centrosomes: accumulates at the microtubule bridges that connect pairs of cells and enables the formation of a non-centrosomal microtubule-organizing center that directs intracellular transport in the early embryo. Couples non-centrosomal microtubules with actin: interaction with MACF1 at the minus ends of non-centrosomal microtubules, tethers the microtubules to actin filaments, regulating focal adhesion size and cell migration. Plays a key role in the generation of non-centrosomal microtubules by accumulating in the pericentrosomal region and cooperating with KATNA1 to release non-centrosomal microtubules from the centrosome. Through the microtubule cytoskeleton, also regulates the organization of cellular organelles including the Golgi and the early endosomes. Through interaction with AKAP9, involved in translocation of Golgi vesicles in epithelial cells, where microtubules are mainly non-centrosomal. Plays an important role in motile cilia function by facilitatating proper orientation of basal bodies and formation of central microtubule pairs in motile cilia. The protein is Calmodulin-regulated spectrin-associated protein 3 of Mus musculus (Mouse).